The primary structure comprises 760 residues: Metal transporter cnnm-2 (760 aa).

The signal sequence occupies residues 1–21 (MIIKVFLRLLLLCAHIVCIDG). Over 22 to 153 (KLEIRPVVSG…ETFMPVWAQC (132 aa)) the chain is Extracellular. N-linked (GlcNAc...) asparagine glycosylation is present at Asn-88. In terms of domain architecture, CNNM transmembrane spans 145–323 (TFMPVWAQCA…MENDACDIDL (179 aa)). Residues 154–174 (AILCLLFSISALCSGLTLGLM) traverse the membrane as a helical segment. Residues 175–208 (ALTPQELSILMKSGSQREKKHAAAIYPIRCHGNR) lie on the Cytoplasmic side of the membrane. A helical membrane pass occupies residues 209 to 229 (LLCTVIIMNVIVNTGITLLFD). Position 230 (Asp-230) is a topological domain, extracellular. Residues 231–251 (LAEGLIAFVASTVGIVVFGEI) form a helical membrane-spanning segment. The Cytoplasmic segment spans residues 252–261 (LPQSICVKYG). Residues 262–282 (LAVGANTIFITKFFMFLLFPI) form a helical membrane-spanning segment. Residues 283-760 (TWPLGKILDK…SVEELKPLME (478 aa)) are Extracellular-facing. 2 N-linked (GlcNAc...) asparagine glycosylation sites follow: Asn-302 and Asn-403. CBS domains are found at residues 344 to 406 (MTDI…NITV) and 442 to 512 (MVAK…ITDE). 3 N-linked (GlcNAc...) asparagine glycosylation sites follow: Asn-528, Asn-592, and Asn-667. The disordered stretch occupies residues 708–734 (DDFGSPTRKASILDSSPNSRKRSSTSV).

It belongs to the ACDP family.

It localises to the cell membrane. In terms of biological role, probable metal transporter. Probably acts redundantly with the other metal transport proteins cnnm-1, cnnm-3, cnnm-4 and cnnm-5 to regulate Mg(2+) homeostasis. The polypeptide is Metal transporter cnnm-2 (Caenorhabditis elegans).